Reading from the N-terminus, the 146-residue chain is NADH-quinone oxidoreductase subunit A (146 aa).

3 helical membrane-spanning segments follow: residues 14–34, 68–88, and 96–116; these read FGLF…GGFL, LVAM…AWAV, and IGFI…IYLV.

It belongs to the complex I subunit 3 family. NDH-1 is composed of 13 different subunits. Subunits NuoA, H, J, K, L, M, N constitute the membrane sector of the complex.

The protein resides in the cell inner membrane. The catalysed reaction is a quinone + NADH + 5 H(+)(in) = a quinol + NAD(+) + 4 H(+)(out). Its function is as follows. NDH-1 shuttles electrons from NADH, via FMN and iron-sulfur (Fe-S) centers, to quinones in the respiratory chain. The immediate electron acceptor for the enzyme in this species is believed to be ubiquinone. Couples the redox reaction to proton translocation (for every two electrons transferred, four hydrogen ions are translocated across the cytoplasmic membrane), and thus conserves the redox energy in a proton gradient. The protein is NADH-quinone oxidoreductase subunit A of Pectobacterium carotovorum subsp. carotovorum (Erwinia carotovora subsp. carotovora).